The sequence spans 232 residues: Fibrillarin-like rRNA/tRNA 2'-O-methyltransferase (232 aa).

S-adenosyl-L-methionine-binding positions include Thr-89–Thr-90, Glu-108–Phe-109, Asp-133–Ala-134, and Asp-153–Gln-156.

Belongs to the methyltransferase superfamily. Fibrillarin family. As to quaternary structure, interacts with nop5. Component of box C/D small ribonucleoprotein (sRNP) particles that contain rpl7ae, FlpA and nop5, plus a guide RNA.

Functionally, involved in pre-rRNA and tRNA processing. Utilizes the methyl donor S-adenosyl-L-methionine to catalyze the site-specific 2'-hydroxyl methylation of ribose moieties in rRNA and tRNA. Site specificity is provided by a guide RNA that base pairs with the substrate. Methylation occurs at a characteristic distance from the sequence involved in base pairing with the guide RNA. This Saccharolobus islandicus (strain L.S.2.15 / Lassen #1) (Sulfolobus islandicus) protein is Fibrillarin-like rRNA/tRNA 2'-O-methyltransferase.